Reading from the N-terminus, the 43-residue chain is Hemolysin H3C (43 aa).

Residue Met-1 is modified to N-formylmethionine.

It belongs to the staphylococcal hemolytic protein family.

It localises to the secreted. Virulence factor. Causes hemolysis of erythrocytes from sheep (HD(50)=2.63 mM), rabbit (HD(50)=2.37 mM), guinea pig (HD(50)=1.98 mM), dog (HD(50)=1.02 mM) and human (HD(50)=2.07 mM). Acts synergistically with beta-hemolysins from S.aureus ATCC 25923. Cytotoxic towards human dermal fibroblasts. The protein is Hemolysin H3C of Staphylococcus cohnii subsp. cohnii.